A 294-amino-acid chain; its full sequence is tRNA pseudouridine synthase A (294 aa).

Residue Asp64 is the Nucleophile of the active site. Tyr122 lines the substrate pocket.

It belongs to the tRNA pseudouridine synthase TruA family. As to quaternary structure, homodimer.

It carries out the reaction uridine(38/39/40) in tRNA = pseudouridine(38/39/40) in tRNA. In terms of biological role, formation of pseudouridine at positions 38, 39 and 40 in the anticodon stem and loop of transfer RNAs. The sequence is that of tRNA pseudouridine synthase A from Synechococcus sp. (strain ATCC 27144 / PCC 6301 / SAUG 1402/1) (Anacystis nidulans).